Reading from the N-terminus, the 251-residue chain is tRNA pseudouridine synthase A (251 aa).

The Nucleophile role is filled by Asp-56. Tyr-110 contributes to the substrate binding site.

Belongs to the tRNA pseudouridine synthase TruA family.

It catalyses the reaction uridine(38/39/40) in tRNA = pseudouridine(38/39/40) in tRNA. Formation of pseudouridine at positions 38, 39 and 40 in the anticodon stem and loop of transfer RNAs. This Picrophilus torridus (strain ATCC 700027 / DSM 9790 / JCM 10055 / NBRC 100828 / KAW 2/3) protein is tRNA pseudouridine synthase A.